Reading from the N-terminus, the 420-residue chain is Glutamyl-tRNA reductase (420 aa).

Residues 49–52 (TCNR), S109, 114–116 (EPQ), and Q120 contribute to the substrate site. The active-site Nucleophile is C50. 189 to 194 (GAGETI) is an NADP(+) binding site.

This sequence belongs to the glutamyl-tRNA reductase family. As to quaternary structure, homodimer.

It catalyses the reaction (S)-4-amino-5-oxopentanoate + tRNA(Glu) + NADP(+) = L-glutamyl-tRNA(Glu) + NADPH + H(+). Its pathway is porphyrin-containing compound metabolism; protoporphyrin-IX biosynthesis; 5-aminolevulinate from L-glutamyl-tRNA(Glu): step 1/2. Its function is as follows. Catalyzes the NADPH-dependent reduction of glutamyl-tRNA(Glu) to glutamate 1-semialdehyde (GSA). This Yersinia enterocolitica serotype O:8 / biotype 1B (strain NCTC 13174 / 8081) protein is Glutamyl-tRNA reductase.